The following is a 154-amino-acid chain: Low molecular weight protein-tyrosine-phosphatase PtpA (154 aa).

Cys-8 acts as the Nucleophile in catalysis. Arg-14 is an active-site residue. Asp-120 functions as the Proton donor in the catalytic mechanism.

Belongs to the low molecular weight phosphotyrosine protein phosphatase family.

The catalysed reaction is O-phospho-L-tyrosyl-[protein] + H2O = L-tyrosyl-[protein] + phosphate. Dephosphorylates the phosphotyrosine-containing proteins. This Staphylococcus saprophyticus subsp. saprophyticus (strain ATCC 15305 / DSM 20229 / NCIMB 8711 / NCTC 7292 / S-41) protein is Low molecular weight protein-tyrosine-phosphatase PtpA (ptpA).